A 275-amino-acid polypeptide reads, in one-letter code: Large ribosomal subunit protein uL2 (275 aa).

The segment covering Asp35 to Ile49 has biased composition (polar residues). Disordered stretches follow at residues Asp35–Lys59 and Ala224–Arg275. The segment covering Thr50–Lys59 has biased composition (basic residues).

It belongs to the universal ribosomal protein uL2 family. Part of the 50S ribosomal subunit. Forms a bridge to the 30S subunit in the 70S ribosome.

In terms of biological role, one of the primary rRNA binding proteins. Required for association of the 30S and 50S subunits to form the 70S ribosome, for tRNA binding and peptide bond formation. It has been suggested to have peptidyltransferase activity; this is somewhat controversial. Makes several contacts with the 16S rRNA in the 70S ribosome. The polypeptide is Large ribosomal subunit protein uL2 (Burkholderia orbicola (strain AU 1054)).